A 217-amino-acid chain; its full sequence is NAD(P)H-hydrate epimerase (217 aa).

The YjeF N-terminal domain maps to 1–217; the sequence is MRAIENAAMA…VAVADIGLSS (217 aa). 48–52 is a binding site for (6S)-NADPHX; it reads NNGGD. K(+) contacts are provided by Asn-49 and Asp-127. Residues 131-137 and Asp-165 contribute to the (6S)-NADPHX site; that span reads GIGQTRP. Thr-168 provides a ligand contact to K(+).

It belongs to the NnrE/AIBP family. It depends on K(+) as a cofactor.

It carries out the reaction (6R)-NADHX = (6S)-NADHX. It catalyses the reaction (6R)-NADPHX = (6S)-NADPHX. Functionally, catalyzes the epimerization of the S- and R-forms of NAD(P)HX, a damaged form of NAD(P)H that is a result of enzymatic or heat-dependent hydration. This is a prerequisite for the S-specific NAD(P)H-hydrate dehydratase to allow the repair of both epimers of NAD(P)HX. The chain is NAD(P)H-hydrate epimerase from Cereibacter sphaeroides (strain KD131 / KCTC 12085) (Rhodobacter sphaeroides).